Consider the following 587-residue polypeptide: Aspartate--tRNA ligase (587 aa).

Residue Glu173 coordinates L-aspartate. An aspartate region spans residues 197-200 (QTLK). Arg219 serves as a coordination point for L-aspartate. Residues 219–221 (RDE) and Gln228 contribute to the ATP site. L-aspartate is bound at residue His446. Glu480 is an ATP binding site. Arg487 contributes to the L-aspartate binding site. 532-535 (GLDR) is a binding site for ATP.

It belongs to the class-II aminoacyl-tRNA synthetase family. Type 1 subfamily. Homodimer.

It is found in the cytoplasm. The enzyme catalyses tRNA(Asp) + L-aspartate + ATP = L-aspartyl-tRNA(Asp) + AMP + diphosphate. Catalyzes the attachment of L-aspartate to tRNA(Asp) in a two-step reaction: L-aspartate is first activated by ATP to form Asp-AMP and then transferred to the acceptor end of tRNA(Asp). This Bacteroides thetaiotaomicron (strain ATCC 29148 / DSM 2079 / JCM 5827 / CCUG 10774 / NCTC 10582 / VPI-5482 / E50) protein is Aspartate--tRNA ligase.